The primary structure comprises 222 residues: DNA mismatch repair protein MutH (222 aa).

It belongs to the MutH family.

The protein resides in the cytoplasm. Functionally, sequence-specific endonuclease that cleaves unmethylated GATC sequences. It is involved in DNA mismatch repair. The chain is DNA mismatch repair protein MutH from Pasteurella multocida (strain Pm70).